A 225-amino-acid polypeptide reads, in one-letter code: NAD(P)H-quinone oxidoreductase subunit K, chloroplastic (225 aa).

4 residues coordinate [4Fe-4S] cluster: Cys-43, Cys-44, Cys-108, and Cys-139.

Belongs to the complex I 20 kDa subunit family. In terms of assembly, NDH is composed of at least 16 different subunits, 5 of which are encoded in the nucleus. The cofactor is [4Fe-4S] cluster.

The protein resides in the plastid. The protein localises to the chloroplast thylakoid membrane. The catalysed reaction is a plastoquinone + NADH + (n+1) H(+)(in) = a plastoquinol + NAD(+) + n H(+)(out). The enzyme catalyses a plastoquinone + NADPH + (n+1) H(+)(in) = a plastoquinol + NADP(+) + n H(+)(out). NDH shuttles electrons from NAD(P)H:plastoquinone, via FMN and iron-sulfur (Fe-S) centers, to quinones in the photosynthetic chain and possibly in a chloroplast respiratory chain. The immediate electron acceptor for the enzyme in this species is believed to be plastoquinone. Couples the redox reaction to proton translocation, and thus conserves the redox energy in a proton gradient. The protein is NAD(P)H-quinone oxidoreductase subunit K, chloroplastic of Carica papaya (Papaya).